Reading from the N-terminus, the 257-residue chain is Pyridoxine 5'-phosphate synthase (257 aa).

Asn6 is a 3-amino-2-oxopropyl phosphate binding site. 8–9 lines the 1-deoxy-D-xylulose 5-phosphate pocket; it reads DH. A 3-amino-2-oxopropyl phosphate-binding site is contributed by Arg17. The active-site Proton acceptor is His41. Residues Arg43 and His48 each coordinate 1-deoxy-D-xylulose 5-phosphate. The Proton acceptor role is filled by Glu68. 1-deoxy-D-xylulose 5-phosphate is bound at residue Thr98. His210 functions as the Proton donor in the catalytic mechanism. Residues Gly211 and 232 to 233 contribute to the 3-amino-2-oxopropyl phosphate site; that span reads GQ.

This sequence belongs to the PNP synthase family. Homooctamer; tetramer of dimers.

Its subcellular location is the cytoplasm. The enzyme catalyses 3-amino-2-oxopropyl phosphate + 1-deoxy-D-xylulose 5-phosphate = pyridoxine 5'-phosphate + phosphate + 2 H2O + H(+). It participates in cofactor biosynthesis; pyridoxine 5'-phosphate biosynthesis; pyridoxine 5'-phosphate from D-erythrose 4-phosphate: step 5/5. Functionally, catalyzes the complicated ring closure reaction between the two acyclic compounds 1-deoxy-D-xylulose-5-phosphate (DXP) and 3-amino-2-oxopropyl phosphate (1-amino-acetone-3-phosphate or AAP) to form pyridoxine 5'-phosphate (PNP) and inorganic phosphate. This Campylobacter jejuni (strain RM1221) protein is Pyridoxine 5'-phosphate synthase.